The primary structure comprises 98 residues: DNA-binding protein Fis (98 aa).

A DNA-binding region (H-T-H motif) is located at residues Gln-74 to Lys-93.

This sequence belongs to the transcriptional regulatory Fis family. In terms of assembly, homodimer.

Activates ribosomal RNA transcription. Plays a direct role in upstream activation of rRNA promoters. The polypeptide is DNA-binding protein Fis (Glaesserella parasuis serovar 5 (strain SH0165) (Haemophilus parasuis)).